Here is a 342-residue protein sequence, read N- to C-terminus: MLDIKRKQDHIEINLTKNVESGLSSGFESVQFVHNALPEINYSSIDTTTTFLNKILQAPILISSMTGGTPRARDINCRLAAAAQKAGIAMGLGSMRTLLTEPSTLDTFTVRNNAPDIVLLANIGAVQLNYGVTPKQCQYLVDSVKADALILHLNVLQELTQPEGDKNWENLLPKIKEVVNYLSVPVIIKEVGFGLSKKTAKQFIDIGVKILDVAGSGGTSWSQVEAYRATNSLQNRIASSFINWGIPTLDSLKMVREASKDISVIASGGLKSGIDGAKAIRMGADIFGLAGPFLKAADVSENLVSEEIQLIIEQLKITMMCTGSRTINNLKKAELRMNHIPL.

6–7 (RK) is a substrate binding site. Residues S63, 64 to 66 (SMT), S94, and N122 contribute to the FMN site. A substrate-binding site is contributed by 94-96 (SMR). Substrate is bound at residue Q157. A Mg(2+)-binding site is contributed by E158. FMN is bound by residues K189, T219, 269 to 271 (GLK), and 290 to 291 (AG).

Belongs to the IPP isomerase type 2 family. In terms of assembly, homooctamer. Dimer of tetramers. FMN is required as a cofactor. The cofactor is NADPH. It depends on Mg(2+) as a cofactor.

The protein localises to the cytoplasm. It catalyses the reaction isopentenyl diphosphate = dimethylallyl diphosphate. Functionally, involved in the biosynthesis of isoprenoids. Catalyzes the 1,3-allylic rearrangement of the homoallylic substrate isopentenyl (IPP) to its allylic isomer, dimethylallyl diphosphate (DMAPP). The protein is Isopentenyl-diphosphate delta-isomerase of Rickettsia bellii (strain RML369-C).